The following is a 507-amino-acid chain: Myocyte-specific enhancer factor 2A (507 aa).

The MADS-box domain maps to arginine 3–tyrosine 57. A DNA-binding region (mef2-type) is located at residues alanine 58–glutamate 86. Position 59 is a phosphoserine; by CK2 (serine 59). A phosphoserine mark is found at serine 98 and serine 235. A disordered region spans residues alanine 175 to arginine 269. The span at leucine 209 to asparagine 245 shows a compositional bias: polar residues. At lysine 249 the chain carries N6-acetyllysine. Serine 255 bears the Phosphoserine mark. Residues methionine 266–glycine 283 form a required for interaction with MAPKs region. Residues serine 289 to leucine 296 form a beta domain region. 2 positions are modified to phosphothreonine; by MAPK7 and MAPK14: threonine 312 and threonine 319. A Phosphoserine; by MAPK7 modification is found at serine 355. Polar residues predominate over residues serine 390–isoleucine 402. A disordered region spans residues serine 390–threonine 507. Lysine 403 is subject to N6-acetyllysine; alternate. A Glycyl lysine isopeptide (Lys-Gly) (interchain with G-Cter in SUMO); alternate cross-link involves residue lysine 403. Serine 408 carries the phosphoserine; by CDK5 modification. Threonine 415 carries the post-translational modification Phosphothreonine. The span at glutamine 423–glutamine 443 shows a compositional bias: pro residues. Serine 453 bears the Phosphoserine mark. The segment covering serine 453 to aspartate 466 has biased composition (low complexity). Basic and acidic residues-rich tracts occupy residues glycine 467–phenylalanine 477 and asparagine 488–threonine 507.

It belongs to the MEF2 family. In terms of assembly, binds DNA as a homo- or heterodimer. Dimerizes with MEF2D. Interacts with HDAC7. Interacts with PIAS1; the interaction enhances sumoylation. Interacts with HDAC4, HDAC9 and SLC2A4RG. Interacts (via the N-terminal) with MAPK7; the interaction results in the phosphorylation and transcriptional activity of MEF2A. In terms of processing, constitutive phosphorylation on Ser-408 promotes Lys-403 sumoylation thus preventing acetylation at this site. Dephosphorylation on Ser-408 by PPP3CA upon neuron depolarization promotes a switch from sumoylation to acetylation on residue Lys-403 leading to inhibition of dendrite claw differentiation. Phosphorylation on Thr-312 and Thr-319 are the main sites involved in p38 MAPK signaling and activate transcription. Phosphorylated on these sites by MAPK14/p38alpha and MAPK11/p38beta, but not by MAPK13/p38delta nor by MAPK12/p38gamma. Phosphorylation on Ser-408 by CDK5 induced by neurotoxicity inhibits MEF2A transcriptional activation leading to apoptosis of cortical neurons. Phosphorylation on Thr-312, Thr-319 and Ser-355 can be induced by EGF. Sumoylation on Lys-403 is enhanced by PIAS1 and represses transcriptional activity. Phosphorylation on Ser-408 is required for sumoylation. Has no effect on nuclear location nor on DNA binding. Sumoylated with SUMO1 and, to a lesser extent with SUMO2 and SUMO3. PIASx facilitates sumoylation in postsynaptic dendrites in the cerebellar cortex and promotes their morphogenesis. Post-translationally, acetylation on Lys-403 activates transcriptional activity. Acetylated by p300 on several sites in diffentiating myocytes. Acetylation on Lys-4 increases DNA binding and transactivation. Hyperacetylation by p300 leads to enhanced cardiac myocyte growth and heart failure. In terms of processing, proteolytically cleaved on several sites by caspase 3 and caspase 7 following neurotoxicity. Preferentially cleaves the CDK5-mediated hyperphosphorylated form which leads to cortical neuron apoptosis and transcriptional inactivation.

Its subcellular location is the nucleus. Transcriptional activator which binds specifically to the MEF2 element, 5'-YTA[AT](4)TAR-3', found in numerous muscle-specific genes. Also involved in the activation of numerous growth factor- and stress-induced genes. Mediates cellular functions not only in skeletal and cardiac muscle development, but also in neuronal differentiation and survival. Plays diverse roles in the control of cell growth, survival and apoptosis via p38 MAPK signaling in muscle-specific and/or growth factor-related transcription. In cerebellar granule neurons, phosphorylated and sumoylated MEF2A represses transcription of NUR77 promoting synaptic differentiation. Associates with chromatin to the ZNF16 promoter. The polypeptide is Myocyte-specific enhancer factor 2A (MEF2A) (Sus scrofa (Pig)).